The primary structure comprises 1082 residues: Putative white-brown complex homolog protein 30 (1082 aa).

2 helical membrane passes run 12–32 (HIFL…SLDG) and 292–312 (NIHA…IMVY). Residues 329–348 (SREAAARHAKETTQARERWK) show a composition bias toward basic and acidic residues. A disordered region spans residues 329–437 (SREAAARHAK…QAPKGKQLHT (109 aa)). The 243-residue stretch at 484–726 (VAFKDLTLTL…FADIGITVPD (243 aa)) folds into the ABC transporter domain. Residue 518 to 525 (GPSGAGKT) participates in ATP binding. The ABC transmembrane type-2 domain maps to 832–1029 (RQYRYFVGRV…TLEAFVLSNA (198 aa)). The next 5 membrane-spanning stretches (helical) occupy residues 853–873 (ALDF…AKVN), 877–897 (IDTL…KISA), 958–978 (YIVL…FAIL), 979–999 (YSPS…TLIA), and 1054–1074 (WILC…IAYF).

The protein belongs to the ABC transporter superfamily. ABCG family. Eye pigment precursor importer (TC 3.A.1.204) subfamily.

Its subcellular location is the membrane. The polypeptide is Putative white-brown complex homolog protein 30 (WBC30) (Arabidopsis thaliana (Mouse-ear cress)).